A 357-amino-acid polypeptide reads, in one-letter code: S-adenosylmethionine:tRNA ribosyltransferase-isomerase (357 aa).

This sequence belongs to the QueA family. In terms of assembly, monomer.

The protein localises to the cytoplasm. It catalyses the reaction 7-aminomethyl-7-carbaguanosine(34) in tRNA + S-adenosyl-L-methionine = epoxyqueuosine(34) in tRNA + adenine + L-methionine + 2 H(+). It participates in tRNA modification; tRNA-queuosine biosynthesis. In terms of biological role, transfers and isomerizes the ribose moiety from AdoMet to the 7-aminomethyl group of 7-deazaguanine (preQ1-tRNA) to give epoxyqueuosine (oQ-tRNA). The chain is S-adenosylmethionine:tRNA ribosyltransferase-isomerase from Buchnera aphidicola subsp. Acyrthosiphon pisum (strain APS) (Acyrthosiphon pisum symbiotic bacterium).